A 200-amino-acid chain; its full sequence is Large ribosomal subunit protein uL4 (200 aa).

The segment at 42 to 65 (TRAQKTRSEVSGGGAKPWRQKGTG) is disordered.

The protein belongs to the universal ribosomal protein uL4 family. As to quaternary structure, part of the 50S ribosomal subunit.

Functionally, one of the primary rRNA binding proteins, this protein initially binds near the 5'-end of the 23S rRNA. It is important during the early stages of 50S assembly. It makes multiple contacts with different domains of the 23S rRNA in the assembled 50S subunit and ribosome. In terms of biological role, forms part of the polypeptide exit tunnel. This chain is Large ribosomal subunit protein uL4, found in Aliivibrio fischeri (strain MJ11) (Vibrio fischeri).